Here is an 82-residue protein sequence, read N- to C-terminus: Cortexin-1 (82 aa).

A disordered region spans residues 1–20 (MSAPWTLSPEPLPPSTGPPV). A helical membrane pass occupies residues 30 to 50 (TVFAFVLCLLVVLVLLMVRCV).

This sequence belongs to the cortexin family. In terms of tissue distribution, neuron specific.

It localises to the membrane. Its function is as follows. May mediate extracellular or intracellular signaling of cortical neurons during forebrain development. This chain is Cortexin-1 (Ctxn1), found in Rattus norvegicus (Rat).